Consider the following 1046-residue polypeptide: FERM, ARHGEF and pleckstrin domain-containing protein 1 (1046 aa).

The FERM domain occupies 40 to 320 (ISIKIQMLDD…EHHAFFRLFE (281 aa)). The interval 374-522 (LTAQPSEQHA…LISPLLNDPS (149 aa)) is disordered. Positions 413 to 424 (KELKASTEDTGQ) are enriched in basic and acidic residues. Residues 458–513 (RMQQNRPQSQQPSTAGSLTGSPHLSELSINSQGGPSVANMSLSPNLSPDAKQSSPL) are compositionally biased toward polar residues. One can recognise a DH domain in the interval 541–732 (KAYFIAKEVA…TEMMAQLHGN (192 aa)). The PH 1 domain occupies 761 to 858 (EFIRLGSLSK…WIEDIQMAID (98 aa)). The segment at 864–907 (SDPVPELLASSPPDNKSPDETTVDQESEDDLSASRTSLERQSPH) is disordered. Over residues 884 to 894 (TTVDQESEDDL) the composition is skewed to acidic residues. Residues 933–1030 (ENQLSGNLLR…WMEVIRSATS (98 aa)) form the PH 2 domain.

As to quaternary structure, interacts with PLXNA4. In terms of tissue distribution, detected in lateral motor column motor neurons and in preganglionic autonomic motor neurons of the column of Terni in the embryonic spinal cord (at protein level).

Its subcellular location is the cell membrane. The protein resides in the synapse. The protein localises to the synaptosome. It is found in the cytoplasm. It localises to the cytosol. Its subcellular location is the cell projection. The protein resides in the filopodium. The protein localises to the dendrite. It is found in the dendritic spine. Functionally, functions as a guanine nucleotide exchange factor for RAC1. Plays a role in semaphorin signaling via its interaction with PLXNA4. Plays a role in the assembly and disassembly of dendritic filopodia, the formation of dendritic spines, regulation of dendrite length and ultimately the formation of synapses. This is FERM, ARHGEF and pleckstrin domain-containing protein 1 (FARP1) from Gallus gallus (Chicken).